Consider the following 951-residue polypeptide: Replication protein A 70 kDa DNA-binding subunit C (951 aa).

The segment at alanine 139–glycine 172 is disordered. A DNA-binding region (OB) is located at residues tryptophan 320–threonine 403. Residues cysteine 612–cysteine 639 form a C4-type zinc finger.

This sequence belongs to the replication factor A protein 1 family. Heterotrimer of RPA1, RPA2 and RPA3 (canonical replication protein A complex). Interacts with RPA2C.

It is found in the nucleus. Its function is as follows. Component of the replication protein A complex (RPA) required for DNA recombination, repair and replication. The activity of RPA is mediated by single-stranded DNA binding and protein interactions. Probably involved in repair of double-strand DNA breaks (DSBs) induced by genotoxic stresses. The protein is Replication protein A 70 kDa DNA-binding subunit C (RPA1C) of Oryza sativa subsp. japonica (Rice).